The following is a 541-amino-acid chain: Cilia- and flagella-associated protein 97 (541 aa).

Phosphoserine is present on residues S8 and S19. Disordered regions lie at residues 28-47, 93-296, 313-337, 406-430, and 495-514; these read ESNS…GINK, ERKA…KQEN, RCVK…VLDA, LSRQ…PPKL, and HYSP…GLSC. Basic and acidic residues-rich tracts occupy residues 35-47, 93-107, and 142-151; these read KQND…GINK, ERKA…HIEN, and RIPKIVKGED. Over residues 152-161 the composition is skewed to acidic residues; the sequence is DYYTDGEESS. T155 carries the post-translational modification Phosphothreonine. 2 positions are modified to phosphoserine: S160 and S161. The segment covering 176–201 has biased composition (low complexity); that stretch reads SSNLKKNVSKKYSSSSLSSSSSRSNS. The segment covering 207-218 has biased composition (basic and acidic residues); it reads GSDRQRRSESHS. Composition is skewed to polar residues over residues 219 to 232 and 240 to 250; these read SGKC…SSPK and KSSAQPSSTKQ. S230 is modified (phosphoserine). A Phosphoserine modification is found at S258. The segment covering 267–277 has biased composition (polar residues); sequence PLSTPDVSPAQ. Basic and acidic residues predominate over residues 287 to 296; sequence QKVKVKKQEN. A coiled-coil region spans residues 382-459; that stretch reads RKNYSFTREE…ALLKRLEAVK (78 aa). Polar residues predominate over residues 503-513; the sequence is SRTSSATSGLS.

It belongs to the CFAP97 family. Highly expressed in testis with lower levels detected in other tissues including lung, heart and kidney.

This Mus musculus (Mouse) protein is Cilia- and flagella-associated protein 97.